The sequence spans 133 residues: MEQSLHLEIISPDHTIVSDRVTYVNLPGVNGELGILPGHIPLMAALDIGKLHYQQDSKNYYVFISAGFAEVSNNKVTVLTEAAEKASEIDVARAQAAKERAKARLLKAEEDIDMARAEAAMHRAIIRLNISSL.

The protein belongs to the ATPase epsilon chain family. In terms of assembly, F-type ATPases have 2 components, CF(1) - the catalytic core - and CF(0) - the membrane proton channel. CF(1) has five subunits: alpha(3), beta(3), gamma(1), delta(1), epsilon(1). CF(0) has three main subunits: a, b and c.

It localises to the cell membrane. Produces ATP from ADP in the presence of a proton gradient across the membrane. The polypeptide is ATP synthase epsilon chain (Lawsonia intracellularis (strain PHE/MN1-00)).